A 309-amino-acid chain; its full sequence is MTLITICGPTATGKSGLALDLAHRLGSIILSADSRQIYKYFNIGTAKPTIKEQQLVSHYLIDICEPTEILTLAEYQKQAQSFIQSPGSQTDVVLPTLLVGGTGLYIKAIVKGLKIPRVGPNEKLRSQLANLGQKQCYKMLQQVDQVAVEKIHPNDVVRTLRALEVFYVSGKPISQQQGEDLPNYPILQIGLDCDVEVLGERIRDRTEKMVEVGLVEEVKCLCEKYGEKLPLLNTLGYAEMKQYLAGDISLAEAIKATVLHTRQFAKRQRTWFRGYPEIEWFDGNAPNLLDKVWERVREFTRILAEKTQE.

8–15 (GPTATGKS) is a binding site for ATP. 10 to 15 (TATGKS) contributes to the substrate binding site. Positions 33 to 36 (DSRQ) are interaction with substrate tRNA.

The protein belongs to the IPP transferase family. As to quaternary structure, monomer. It depends on Mg(2+) as a cofactor.

It carries out the reaction adenosine(37) in tRNA + dimethylallyl diphosphate = N(6)-dimethylallyladenosine(37) in tRNA + diphosphate. In terms of biological role, catalyzes the transfer of a dimethylallyl group onto the adenine at position 37 in tRNAs that read codons beginning with uridine, leading to the formation of N6-(dimethylallyl)adenosine (i(6)A). This chain is tRNA dimethylallyltransferase, found in Trichodesmium erythraeum (strain IMS101).